A 158-amino-acid polypeptide reads, in one-letter code: MLP-like protein 43 (158 aa).

At alanine 2 the chain carries N-acetylalanine.

Belongs to the MLP family.

The polypeptide is MLP-like protein 43 (MLP43) (Arabidopsis thaliana (Mouse-ear cress)).